Consider the following 243-residue polypeptide: Peptidyl-tRNA hydrolase (243 aa).

Residue Y14 coordinates tRNA. H19 (proton acceptor) is an active-site residue. Positions 64, 66, and 112 each coordinate tRNA. Basic and acidic residues predominate over residues 190 to 207 (KAEEEKPRKEGKDGEKKP). Positions 190 to 243 (KAEEEKPRKEGKDGEKKPAGQSHIRQARSSNQPKLPATGPMAEMLKKMFGNKGE) are disordered. The span at 212 to 222 (HIRQARSSNQP) shows a compositional bias: polar residues.

The protein belongs to the PTH family. As to quaternary structure, monomer.

It localises to the cytoplasm. It catalyses the reaction an N-acyl-L-alpha-aminoacyl-tRNA + H2O = an N-acyl-L-amino acid + a tRNA + H(+). In terms of biological role, hydrolyzes ribosome-free peptidyl-tRNAs (with 1 or more amino acids incorporated), which drop off the ribosome during protein synthesis, or as a result of ribosome stalling. Catalyzes the release of premature peptidyl moieties from peptidyl-tRNA molecules trapped in stalled 50S ribosomal subunits, and thus maintains levels of free tRNAs and 50S ribosomes. This chain is Peptidyl-tRNA hydrolase, found in Rhizobium etli (strain CIAT 652).